The sequence spans 238 residues: Monocyte to macrophage differentiation factor (238 aa).

Residues 1-28 (MQFRNRFQRFMNHRAPANGRYKPTCYEH) are Cytoplasmic-facing. Residues 29-49 (AANCYTHAFLIVPAIVGSALL) form a helical membrane-spanning segment. Residues 50-61 (HRLSDDCWEKIT) are Lumenal-facing. The helical transmembrane segment at 62 to 82 (AWIYGMGLCALFIVSTVFHIV) threads the bilayer. Residues 83–101 (SWKKSHLRTVEHCFHMCDR) are Cytoplasmic-facing. Residues 102–122 (MVIYFFIAASYAPWLNLRELG) traverse the membrane as a helical segment. Position 123 (P123) is a topological domain, lumenal. A helical membrane pass occupies residues 124–144 (LASHMRWFIWLMAAGGTIYVF). The Cytoplasmic portion of the chain corresponds to 145-151 (LYHEKYK). Residues 152–172 (VVELFFYLTMGFSPALVVTSM) form a helical membrane-spanning segment. At 173 to 174 (NN) the chain is on the lumenal side. The chain crosses the membrane as a helical span at residues 175 to 195 (TDGLQELACGGLIYCLGVVFF). At 196–198 (KSD) the chain is on the cytoplasmic side. A helical membrane pass occupies residues 199-219 (GIIPFAHAIWHLFVATAAAVH). Topologically, residues 220–238 (YYAIWKYLYRSPTDFIRHL) are lumenal.

The protein belongs to the ADIPOR family. Preferentially expressed in the brain.

The protein resides in the late endosome membrane. The protein localises to the lysosome membrane. Is involved in the dynamics of lysosomal membranes associated with microglial activation following brain lesion. The polypeptide is Monocyte to macrophage differentiation factor (Rattus norvegicus (Rat)).